Consider the following 763-residue polypeptide: Phosphoglycerol transferase I (763 aa).

A run of 4 helical transmembrane segments spans residues 1 to 21 (MSEL…AWKA), 26 to 46 (WWFA…ITLF), 77 to 97 (ILPG…LGWI), and 108 to 128 (FGYS…SPAF).

The protein belongs to the OpgB family.

It is found in the cell inner membrane. It carries out the reaction a phosphatidylglycerol + a membrane-derived-oligosaccharide D-glucose = a 1,2-diacyl-sn-glycerol + a membrane-derived-oligosaccharide 6-(glycerophospho)-D-glucose.. It functions in the pathway glycan metabolism; osmoregulated periplasmic glucan (OPG) biosynthesis. Its function is as follows. Transfers a phosphoglycerol residue from phosphatidylglycerol to the membrane-bound nascent glucan backbones. The protein is Phosphoglycerol transferase I of Shigella boydii serotype 18 (strain CDC 3083-94 / BS512).